Consider the following 501-residue polypeptide: Glycogen synthase 1 (501 aa).

Lys18 is a binding site for ADP-alpha-D-glucose.

Belongs to the glycosyltransferase 1 family. Bacterial/plant glycogen synthase subfamily.

It catalyses the reaction [(1-&gt;4)-alpha-D-glucosyl](n) + ADP-alpha-D-glucose = [(1-&gt;4)-alpha-D-glucosyl](n+1) + ADP + H(+). Its pathway is glycan biosynthesis; glycogen biosynthesis. Synthesizes alpha-1,4-glucan chains using ADP-glucose. The protein is Glycogen synthase 1 of Geobacter sulfurreducens (strain ATCC 51573 / DSM 12127 / PCA).